The chain runs to 88 residues: Small ribosomal subunit protein bS20 (88 aa).

The protein belongs to the bacterial ribosomal protein bS20 family.

Its function is as follows. Binds directly to 16S ribosomal RNA. In Clostridium kluyveri (strain NBRC 12016), this protein is Small ribosomal subunit protein bS20.